Reading from the N-terminus, the 575-residue chain is Proline--tRNA ligase (575 aa).

It belongs to the class-II aminoacyl-tRNA synthetase family. ProS type 1 subfamily. As to quaternary structure, homodimer.

It is found in the cytoplasm. The catalysed reaction is tRNA(Pro) + L-proline + ATP = L-prolyl-tRNA(Pro) + AMP + diphosphate. Its function is as follows. Catalyzes the attachment of proline to tRNA(Pro) in a two-step reaction: proline is first activated by ATP to form Pro-AMP and then transferred to the acceptor end of tRNA(Pro). As ProRS can inadvertently accommodate and process non-cognate amino acids such as alanine and cysteine, to avoid such errors it has two additional distinct editing activities against alanine. One activity is designated as 'pretransfer' editing and involves the tRNA(Pro)-independent hydrolysis of activated Ala-AMP. The other activity is designated 'posttransfer' editing and involves deacylation of mischarged Ala-tRNA(Pro). The misacylated Cys-tRNA(Pro) is not edited by ProRS. This chain is Proline--tRNA ligase, found in Pseudothermotoga lettingae (strain ATCC BAA-301 / DSM 14385 / NBRC 107922 / TMO) (Thermotoga lettingae).